Reading from the N-terminus, the 363-residue chain is 3-isopropylmalate dehydrogenase (363 aa).

Position 78 to 91 (glycine 78 to glutamate 91) interacts with NAD(+). Substrate-binding residues include arginine 99, arginine 109, arginine 138, and aspartate 227. Positions 227, 251, and 255 each coordinate Mg(2+). Position 285-297 (glycine 285–asparagine 297) interacts with NAD(+).

This sequence belongs to the isocitrate and isopropylmalate dehydrogenases family. LeuB type 1 subfamily. As to quaternary structure, homodimer. Mg(2+) is required as a cofactor. The cofactor is Mn(2+).

The protein localises to the cytoplasm. The enzyme catalyses (2R,3S)-3-isopropylmalate + NAD(+) = 4-methyl-2-oxopentanoate + CO2 + NADH. Its pathway is amino-acid biosynthesis; L-leucine biosynthesis; L-leucine from 3-methyl-2-oxobutanoate: step 3/4. Catalyzes the oxidation of 3-carboxy-2-hydroxy-4-methylpentanoate (3-isopropylmalate) to 3-carboxy-4-methyl-2-oxopentanoate. The product decarboxylates to 4-methyl-2 oxopentanoate. The sequence is that of 3-isopropylmalate dehydrogenase from Pectobacterium atrosepticum (strain SCRI 1043 / ATCC BAA-672) (Erwinia carotovora subsp. atroseptica).